Reading from the N-terminus, the 408-residue chain is S100P-binding protein (408 aa).

3 disordered regions span residues 1-111 (MMCS…AETP), 162-234 (KDET…SENP), and 271-291 (VSTS…MKGH). Residues 28-59 (SLDEDGLDDSLLELSEGEEDDGDVNYTEEEID) show a composition bias toward acidic residues. Basic and acidic residues-rich tracts occupy residues 77-86 (DGGHVEKGER) and 162-185 (KDET…REDG). S187 carries the phosphoserine modification. Residues 188-234 (PNESKLCTESEGISPNNSAWNGPQLSSSNNNFQQTVSDKNMPDSENP) show a composition bias toward polar residues. A compositionally biased stretch (basic and acidic residues) spans 280–291 (VLNKDSGKMKGH).

In terms of assembly, interacts with S100P. Expressed in brain, spleen, and lung. Not detected in pancreas or liver. In pancreas, expressed predominantly in islet cells and to a lesser extent in acinar cells, but not expressed in ductal cells. Up-regulated in various pancreatic ductal adenocarcinomas and pancreatic intraepithelial neoplasias. Detected in pancreatic ductal adenocarcinoma cells (at protein level). Not detected in non-neoplastic ductal epithelium (at protein level).

The protein resides in the nucleus. The polypeptide is S100P-binding protein (Homo sapiens (Human)).